Here is a 152-residue protein sequence, read N- to C-terminus: Snaclec coagulation factor IX/factor X-binding protein subunit A (152 aa).

The signal sequence occupies residues 1 to 23; the sequence is MGRFIFVSFGLLVVAASLSGTGA. Cystine bridges form between Cys-25-Cys-36, Cys-53-Cys-150, and Cys-125-Cys-142. One can recognise a C-type lectin domain in the interval 32–151; sequence YEGHCYKAFE…CGQRIPFVCE (120 aa). 3 residues coordinate Ca(2+): Ser-64, Glu-66, and Glu-70. Glu-151 provides a ligand contact to Ca(2+).

This sequence belongs to the snaclec family. In terms of assembly, heterodimer of subunits A and B; disulfide-linked. As to expression, expressed by the venom gland.

The protein localises to the secreted. Its function is as follows. Anticoagulant protein which binds to the gamma-carboxyglutamic acid-domain regions of factors IX (F9) and factor X (F10) in the presence of calcium with a 1 to 1 stoichiometry. The protein is Snaclec coagulation factor IX/factor X-binding protein subunit A of Trimeresurus stejnegeri (Chinese green tree viper).